A 909-amino-acid chain; its full sequence is Protein NLP1 (909 aa).

4 disordered regions span residues 51–71, 536–556, 568–605, and 690–745; these read KSLK…DNSP, KEDP…PVPN, ASTP…RAKT, and NSPN…ENTG. Residues 55 to 70 show a composition bias toward polar residues; the sequence is QTEQSPSASTAMNDNS. In terms of domain architecture, RWP-RK spans 595–676; that stretch reads RRPGEKKRAK…MDSVQGAQGS (82 aa). The span at 690–716 shows a compositional bias: polar residues; the sequence is NSPNMSSNGPSLKSNEQPSHLNAQTDN. The span at 725-745 shows a compositional bias: low complexity; it reads RSPSSSCSKSSGSSNNNENTG. The 84-residue stretch at 811–894 folds into the PB1 domain; that stretch reads AIKVKATFGE…HTIKISLNEA (84 aa).

It localises to the nucleus. Functionally, probable transcription factor. The sequence is that of Protein NLP1 (NLP1) from Arabidopsis thaliana (Mouse-ear cress).